The chain runs to 828 residues: E3 ubiquitin-protein ligase bre-1 (828 aa).

The disordered stretch occupies residues 1–25 (MMKRNNEGIGGEGVANSPPDDTQQK). An interaction with ubc-1 region spans residues 1 to 309 (MMKRNNEGIG…SREIEALRAD (309 aa)). Coiled-coil stretches lie at residues 53-92 (QAAKLRQTVLIKNKRISDLERENERAKRRQLTDESNFLKV) and 185-251 (HKEL…TEKQ). Residues 269 to 298 (ASGNATASSSATLNQSEKKMGSPGSPPSES) show a composition bias toward low complexity. Residues 269–304 (ASGNATASSSATLNQSEKKMGSPGSPPSESTSREIE) form a disordered region. Coiled-coil stretches lie at residues 311–345 (DEQAAIAARRLQELEDTNRKLQSMAQDISKLKMET), 460–616 (VNTL…RNLK), and 660–756 (DEVL…NDSA). An RING-type zinc finger spans residues 776-815 (CPSCKTRPKDCIMLKCYHLFCETCIKTMYDTRQRKCPKCN).

This sequence belongs to the BRE1 family. Interacts with ubc-1. Interacts with mrg-1.

The protein localises to the nucleus. It catalyses the reaction S-ubiquitinyl-[E2 ubiquitin-conjugating enzyme]-L-cysteine + [acceptor protein]-L-lysine = [E2 ubiquitin-conjugating enzyme]-L-cysteine + N(6)-ubiquitinyl-[acceptor protein]-L-lysine.. Its pathway is protein modification; protein ubiquitination. Functionally, E3 ubiquitin-protein ligase that mediates monoubiquitination of 'Lys-117' of histone H2B. H2B 'Lys-117' ubiquitination gives a specific tag for epigenetic transcriptional activation and is also prerequisite for histone H3 'Lys-4' and 'Lys-79' methylation. Involved in regulating stem cell proliferative fate. The sequence is that of E3 ubiquitin-protein ligase bre-1 from Caenorhabditis briggsae.